A 1357-amino-acid chain; its full sequence is DNA-directed RNA polymerase subunit beta (1357 aa).

Belongs to the RNA polymerase beta chain family. The RNAP catalytic core consists of 2 alpha, 1 beta, 1 beta' and 1 omega subunit. When a sigma factor is associated with the core the holoenzyme is formed, which can initiate transcription.

The catalysed reaction is RNA(n) + a ribonucleoside 5'-triphosphate = RNA(n+1) + diphosphate. DNA-dependent RNA polymerase catalyzes the transcription of DNA into RNA using the four ribonucleoside triphosphates as substrates. This is DNA-directed RNA polymerase subunit beta from Pseudomonas paraeruginosa (strain DSM 24068 / PA7) (Pseudomonas aeruginosa (strain PA7)).